We begin with the raw amino-acid sequence, 246 residues long: MPNTILKLERIRKDLELSRSIRQTIIPNLSLSIERGEFVTITGPSGSGKSTLLYLMGGLDKPTSGSVWLDGDELTAKNESEMNRIRNEKIGFIYQFHFLLPEFTAVENVSMPMLINGRRSRKEIRDRAMMLLDLVELQDKYTNKPNQMSGGQQQRVAIARALANEPKVLLGDEPTGNLDSRSANNVYQLFDRLNRELQQTIIVVTHDEAFANRASRRIHLVDGQVAYDRQLRTEASVTNEAASLVS.

The ABC transporter domain maps to 6 to 244 (LKLERIRKDL…ASVTNEAASL (239 aa)). 43–50 (GPSGSGKS) lines the ATP pocket.

This sequence belongs to the ABC transporter superfamily. Lipoprotein translocase (TC 3.A.1.125) family. As to quaternary structure, the complex is composed of two ATP-binding proteins (LolD) and two transmembrane proteins (LolC and LolE).

Its subcellular location is the cell inner membrane. Its function is as follows. Part of the ABC transporter complex LolCDE involved in the translocation of mature outer membrane-directed lipoproteins, from the inner membrane to the periplasmic chaperone, LolA. Responsible for the formation of the LolA-lipoprotein complex in an ATP-dependent manner. In Chlorobium chlorochromatii (strain CaD3), this protein is Lipoprotein-releasing system ATP-binding protein LolD 1.